Reading from the N-terminus, the 679-residue chain is Stress-70 protein, mitochondrial (679 aa).

The N-terminal 46 residues, M1–Y46, are a transit peptide targeting the mitochondrion. An interaction with NFS1 region spans residues M1–V432. T63 and N64 together coordinate ADP. The nucleotide-binding domain (NBD) stretch occupies residues T63 to D431. An N6-acetyllysine modification is found at K76. T87 is modified (phosphothreonine). N6-acetyllysine; alternate occurs at positions 135 and 138. 2 positions are modified to N6-succinyllysine; alternate: K135 and K138. Position 143 is an N6-acetyllysine (K143). Residue K206 is modified to N6-acetyllysine; alternate. K206 bears the N6-succinyllysine; alternate mark. K206 is subject to N6-malonyllysine; alternate. Residues K234 and K288 each carry the N6-acetyllysine modification. Position 300 is an N6-acetyllysine; alternate (K300). K300 carries the N6-succinyllysine; alternate modification. ADP contacts are provided by E313, K316, and S320. At K360 the chain carries N6-acetyllysine; alternate. K360 carries the N6-succinyllysine; alternate modification. K368 is modified (N6-succinyllysine). The ADP site is built by G388 and R391. K394 carries the N6-succinyllysine modification. S408 is subject to Phosphoserine. The interval V432–T441 is interdomain linker. The segment at V432–Q679 is interaction with FXN and ISCU. Residues P442–Q679 form a substrate-binding domain (SBD) region. Residue R513 is modified to Omega-N-methylarginine. Residues K567 and K600 each carry the N6-acetyllysine; alternate modification. K567 and K600 each carry N6-succinyllysine; alternate. K610 bears the N6-succinyllysine mark. Position 612 is an N6-acetyllysine (K612). K646 carries the post-translational modification N6-acetyllysine; alternate. K646 carries the post-translational modification N6-succinyllysine; alternate. The interval A656–Q679 is disordered. Basic and acidic residues predominate over residues E669–Q679.

This sequence belongs to the heat shock protein 70 family. Interacts strongly with the intermediate form of FXN and weakly with its mature form. Interacts with HSCB. Associates with the mitochondrial contact site and cristae organizing system (MICOS) complex, composed of at least MICOS10/MIC10, CHCHD3/MIC19, CHCHD6/MIC25, APOOL/MIC27, IMMT/MIC60, APOO/MIC23/MIC26 and QIL1/MIC13. This complex was also known under the names MINOS or MitOS complex. The MICOS complex associates with mitochondrial outer membrane proteins SAMM50, MTX1, MTX2 and DNAJC11, mitochondrial inner membrane protein TMEM11 and with HSPA9. Interacts with DNLZ, the interaction is required to prevent self-aggregation. Interacts with TESPA1. Interacts with PDPN. Interacts with NFU1, NFS1 and ISCU. Interacts with TP53; the interaction promotes TP53 degradation. Interacts (via SBD domain) with UBXN2A; the interaction with UBXN2A inhibits HSPA9/MOT-2 interaction with and degradation of TP53, thereby promotes TP53 translocation to the nucleus. Interacts with ITPR1 AND VDAC1; this interaction couples ITPR1 to VDAC1. Component of the TIM23 mitochondrial inner membrane pre-sequence translocase complex.

It localises to the mitochondrion. The protein localises to the nucleus. Its subcellular location is the nucleolus. It is found in the cytoplasm. The protein resides in the mitochondrion matrix. It carries out the reaction ATP + H2O = ADP + phosphate + H(+). Its activity is regulated as follows. The chaperone activity is regulated by ATP-induced allosteric coupling of the nucleotide-binding (NBD) and substrate-binding (SBD) domains. ATP binding in the NBD leads to a conformational change in the NBD, which is transferred through the interdomain linker (IDL) to the substrate-binding domain (SBD). This elicits a reduced substrate affinity and a faster substrate exchange rate. Upon hydrolysis of ATP to ADP, the protein undergoes a conformational change that increases its affinity for substrate proteins. It cycles through repeated phases of ATP hydrolysis and nucleotide exchange, facilitating repeated cycles of substrate binding and release. Functions in collaboration with co-chaperones. Functions with the co-chaperone, DNLZ, to maintain solubility and regulate ATP hydrolysis. Nucleotide exchange factors, GRPEL1 and GRPEL2, accelerate nucleotide exchange. In terms of biological role, mitochondrial chaperone that plays a key role in mitochondrial protein import, folding, and assembly. Plays an essential role in the protein quality control system, the correct folding of proteins, the re-folding of misfolded proteins, and the targeting of proteins for subsequent degradation. These processes are achieved through cycles of ATP binding, ATP hydrolysis, and ADP release, mediated by co-chaperones. In mitochondria, it associates with the TIM (translocase of the inner membrane) protein complex to assist in the import and folding of mitochondrial proteins. Plays an important role in mitochondrial iron-sulfur cluster (ISC) biogenesis. Interacts with and stabilizes ISC cluster assembly proteins FXN, NFU1, NFS1 and ISCU. Regulates erythropoiesis via stabilization of ISC assembly. Regulates mitochondrial calcium-dependent apoptosis by coupling two calcium channels, ITPR1 and VDAC1, at the mitochondria-associated endoplasmic reticulum (ER) membrane to facilitate calcium transport from the ER lumen to the mitochondria intermembrane space, providing calcium for the downstream calcium channel MCU, which releases it into the mitochondrial matrix. Although primarily located in the mitochondria, it is also found in other cellular compartments. In the cytosol, it associates with proteins involved in signaling, apoptosis, or senescence. It may play a role in cell cycle regulation via its interaction with and promotion of degradation of TP53. May play a role in the control of cell proliferation and cellular aging. Protects against reactive oxygen species (ROS). Extracellular HSPA9 plays a cytoprotective role by preventing cell lysis following immune attack by the membrane attack complex by disrupting formation of the complex. In Mus musculus (Mouse), this protein is Stress-70 protein, mitochondrial.